The chain runs to 170 residues: Adenine phosphoribosyltransferase (170 aa).

The protein belongs to the purine/pyrimidine phosphoribosyltransferase family. In terms of assembly, homodimer.

Its subcellular location is the cytoplasm. It catalyses the reaction AMP + diphosphate = 5-phospho-alpha-D-ribose 1-diphosphate + adenine. It participates in purine metabolism; AMP biosynthesis via salvage pathway; AMP from adenine: step 1/1. Catalyzes a salvage reaction resulting in the formation of AMP, that is energically less costly than de novo synthesis. In Mycoplasma capricolum subsp. capricolum (strain California kid / ATCC 27343 / NCTC 10154), this protein is Adenine phosphoribosyltransferase.